A 415-amino-acid polypeptide reads, in one-letter code: Adenylosuccinate synthetase (415 aa).

GTP-binding positions include 12-18 and 40-42; these read GDEGKGK and GHT. The active-site Proton acceptor is D13. The Mg(2+) site is built by D13 and G40. IMP contacts are provided by residues 13 to 16, 38 to 41, T125, R139, Q219, T234, and R298; these read DEGK and NAGH. The Proton donor role is filled by H41. 294–300 contacts substrate; sequence TTTGRPR. GTP-binding positions include R300, 326 to 328, and 404 to 406; these read KLD and STG.

Belongs to the adenylosuccinate synthetase family. In terms of assembly, homodimer. The cofactor is Mg(2+).

The protein resides in the cytoplasm. It carries out the reaction IMP + L-aspartate + GTP = N(6)-(1,2-dicarboxyethyl)-AMP + GDP + phosphate + 2 H(+). It participates in purine metabolism; AMP biosynthesis via de novo pathway; AMP from IMP: step 1/2. Its function is as follows. Plays an important role in the de novo pathway of purine nucleotide biosynthesis. Catalyzes the first committed step in the biosynthesis of AMP from IMP. In Wolinella succinogenes (strain ATCC 29543 / DSM 1740 / CCUG 13145 / JCM 31913 / LMG 7466 / NCTC 11488 / FDC 602W) (Vibrio succinogenes), this protein is Adenylosuccinate synthetase.